The following is a 548-amino-acid chain: Inosine-5'-monophosphate dehydrogenase (548 aa).

CBS domains are found at residues 121-201 (FILD…EDPV) and 205-261 (MSTE…PLAS). Residues 298–300 (DSS) and 348–350 (GMG) contribute to the NAD(+) site. The K(+) site is built by Gly-350 and Gly-352. Ser-353 serves as a coordination point for IMP. Cys-355 contributes to the K(+) binding site. Cys-355 serves as the catalytic Thioimidate intermediate. Residues 388 to 390 (DGG) and 411 to 412 (GS) contribute to the IMP site. The Proton acceptor role is filled by Arg-461. Gln-473 serves as a coordination point for IMP. Residues 527 to 548 (ASAQTEGNVHGLHSHEKKLYSS) are disordered. Ser-528 provides a ligand contact to K(+). Positions 539-548 (HSHEKKLYSS) are enriched in basic and acidic residues.

The protein belongs to the IMPDH/GMPR family. In terms of assembly, homotetramer. It depends on K(+) as a cofactor.

Its subcellular location is the cytoplasm. It carries out the reaction IMP + NAD(+) + H2O = XMP + NADH + H(+). It participates in purine metabolism; XMP biosynthesis via de novo pathway; XMP from IMP: step 1/1. Mycophenolic acid (MPA) is a non-competitive inhibitor that prevents formation of the closed enzyme conformation by binding to the same site as the amobile flap. In contrast, mizoribine monophosphate (MZP) is a competitive inhibitor that induces the closed conformation. MPA is a potent inhibitor of mammalian IMPDHs but a poor inhibitor of the bacterial enzymes. MZP is a more potent inhibitor of bacterial IMPDH. Functionally, catalyzes the conversion of inosine 5'-phosphate (IMP) to xanthosine 5'-phosphate (XMP), the first committed and rate-limiting step in the de novo synthesis of guanine nucleotides, and therefore plays an important role in the regulation of cell growth. Part of the gene cluster that mediates the biosynthesis of mycophenolic acid (MPA), the first isolated antibiotic natural product in the world. Does not play a role in the biosynthesis of MPA, but is involved in self resistance to MPA, since MPA acts as an inhibitor of IMP dehydrogenases. This chain is Inosine-5'-monophosphate dehydrogenase, found in Penicillium brevicompactum.